The sequence spans 894 residues: Septin and tuftelin-interacting protein 1 homolog (894 aa).

2 disordered regions span residues tyrosine 71–valine 149 and asparagine 187–glycine 225. The segment covering proline 73 to glutamate 84 has biased composition (basic and acidic residues). The span at lysine 97–lysine 126 shows a compositional bias: basic residues. Residues valine 149 to glutamate 195 enclose the G-patch domain. The segment covering aspartate 202–aspartate 217 has biased composition (acidic residues). Positions lysine 329 to glutamate 449 form a coiled coil. The segment at asparagine 785–isoleucine 821 is disordered.

It belongs to the TFP11/STIP family. Identified in the spliceosome C complex.

It is found in the cytoplasm. The protein localises to the nucleus. In terms of biological role, may be involved in pre-mRNA splicing. This chain is Septin and tuftelin-interacting protein 1 homolog (stip-1), found in Dictyostelium discoideum (Social amoeba).